Here is a 31-residue protein sequence, read N- to C-terminus: Cytochrome b6-f complex subunit 6 (31 aa).

The chain crosses the membrane as a helical span at residues 5-25 (ISYLGILVGALLFVTITFLTL).

It belongs to the PetL family. As to quaternary structure, the 4 large subunits of the cytochrome b6-f complex are cytochrome b6, subunit IV (17 kDa polypeptide, PetD), cytochrome f and the Rieske protein, while the 4 small subunits are PetG, PetL, PetM and PetN. The complex functions as a dimer.

The protein resides in the plastid. It localises to the chloroplast thylakoid membrane. Functionally, component of the cytochrome b6-f complex, which mediates electron transfer between photosystem II (PSII) and photosystem I (PSI), cyclic electron flow around PSI, and state transitions. PetL is important for photoautotrophic growth as well as for electron transfer efficiency and stability of the cytochrome b6-f complex. The protein is Cytochrome b6-f complex subunit 6 of Chlorokybus atmophyticus (Soil alga).